Reading from the N-terminus, the 494-residue chain is Glutamyl-tRNA(Gln) amidotransferase subunit A (494 aa).

Catalysis depends on charge relay system residues Lys78 and Ser158. Ser182 serves as the catalytic Acyl-ester intermediate.

The protein belongs to the amidase family. GatA subfamily. In terms of assembly, heterotrimer of A, B and C subunits.

The catalysed reaction is L-glutamyl-tRNA(Gln) + L-glutamine + ATP + H2O = L-glutaminyl-tRNA(Gln) + L-glutamate + ADP + phosphate + H(+). Functionally, allows the formation of correctly charged Gln-tRNA(Gln) through the transamidation of misacylated Glu-tRNA(Gln) in organisms which lack glutaminyl-tRNA synthetase. The reaction takes place in the presence of glutamine and ATP through an activated gamma-phospho-Glu-tRNA(Gln). The polypeptide is Glutamyl-tRNA(Gln) amidotransferase subunit A (Jannaschia sp. (strain CCS1)).